We begin with the raw amino-acid sequence, 1430 residues long: rRNA biogenesis protein RRP5 (1430 aa).

6 S1 motif domains span residues 74–160 (DMLV…LSLK), 176–238 (GFIF…CTCV), 261–329 (GSIV…LTLN), 447–511 (GDLV…VSNR), 531–592 (GNVY…LTLP), and 697–771 (QVGD…VSAK). The disordered stretch occupies residues 1041 to 1145 (KITNGQKKTQ…AKEKAKAEIK (105 aa)). Residues 1043 to 1053 (TNGQKKTQPLT) are compositionally biased toward polar residues. 2 stretches are compositionally biased toward basic and acidic residues: residues 1057-1082 (VKEKPKQNGKLFFEDKTPAKNAKSET) and 1135-1145 (SAKEKAKAEIK). Positions 1119–1157 (LNVAETQKNAAKKKRLSAKEKAKAEIKEEQRLREIEERN) form a coiled coil. HAT repeat units lie at residues 1161-1193 (KARLETIDQYERLVIAQPNNSISWLKYIAFLLS), 1195-1232 (TEIEKARALARRAISTISFRETQELRNMWSALLNMELV), 1265-1297 (KRKDRLSSVLTTVLNKFKTELRVWPVAAEAYFW), 1299-1333 (GKSDQVHNLLQRALRALPNQEHIPCIVSFAKLYAK), 1335-1367 (DNNDMAQTLLDDVVTSYPKRIDIWSVYVDMLIK), and 1369-1404 (GLIDSARNVLERAVVQKLKPNKMQVIYKKYLQLEEN).

It localises to the nucleus. The protein resides in the nucleolus. In terms of biological role, involved in rRNA processing or maturation during ribosome biogenesis. The sequence is that of rRNA biogenesis protein RRP5 from Drosophila melanogaster (Fruit fly).